The following is a 186-amino-acid chain: ADP-ribosylation factor-like protein 6 (186 aa).

Residue glycine 2 is the site of N-myristoyl glycine attachment. Residues 24–31, 69–73, and 130–133 each bind GTP; these read GLDNSGKT, DMSGQ, and NKMD.

It belongs to the small GTPase superfamily. Arf family. As to quaternary structure, interacts with SEC61B, ARL6IP1, ARL6IP2, ARL6IP3, ARL6IP4 ARL6IP5 and ARL6IP6. Interacts (GTP-bound form) with the BBSome a complex that contains BBS1, BBS2, BBS4, BBS5, BBS7, BBS8/TTC8, BBS9 and BBIP10. Interacts (GTP-free form) with IFT27.

The protein localises to the cell projection. Its subcellular location is the cilium membrane. The protein resides in the cytoplasm. It is found in the cytoskeleton. It localises to the cilium axoneme. The protein localises to the cilium basal body. In terms of biological role, involved in membrane protein trafficking at the base of the ciliary organelle. Mediates recruitment onto plasma membrane of the BBSome complex which would constitute a coat complex required for sorting of specific membrane proteins to the primary cilia. Together with the BBSome complex and LTZL1, controls SMO ciliary trafficking and contributes to the sonic hedgehog (SHH) pathway regulation. May regulate cilia assembly and disassembly and subsequent ciliary signaling events such as the Wnt signaling cascade. Isoform 2 may be required for proper retinal function and organization. The chain is ADP-ribosylation factor-like protein 6 (ARL6) from Bos taurus (Bovine).